The following is a 484-amino-acid chain: ATP synthase subunit beta (484 aa).

Residues 104–123 (ERGPIGSKQTMPIHADAPPF) are disordered. Position 156–163 (156–163 (GGAGVGKT)) interacts with ATP.

It belongs to the ATPase alpha/beta chains family. In terms of assembly, F-type ATPases have 2 components, CF(1) - the catalytic core - and CF(0) - the membrane proton channel. CF(1) has five subunits: alpha(3), beta(3), gamma(1), delta(1), epsilon(1). CF(0) has three main subunits: a(1), b(2) and c(9-12). The alpha and beta chains form an alternating ring which encloses part of the gamma chain. CF(1) is attached to CF(0) by a central stalk formed by the gamma and epsilon chains, while a peripheral stalk is formed by the delta and b chains.

Its subcellular location is the cell inner membrane. The enzyme catalyses ATP + H2O + 4 H(+)(in) = ADP + phosphate + 5 H(+)(out). In terms of biological role, produces ATP from ADP in the presence of a proton gradient across the membrane. The catalytic sites are hosted primarily by the beta subunits. The chain is ATP synthase subunit beta from Zymomonas mobilis subsp. mobilis (strain ATCC 31821 / ZM4 / CP4).